Here is a 248-residue protein sequence, read N- to C-terminus: PF03932 family protein CutC (248 aa).

This sequence belongs to the CutC family.

Its subcellular location is the cytoplasm. This Citrobacter koseri (strain ATCC BAA-895 / CDC 4225-83 / SGSC4696) protein is PF03932 family protein CutC.